The sequence spans 716 residues: Translation initiation factor IF-2 (716 aa).

The tract at residues Gln52–Ser135 is disordered. The segment covering Asn56–Lys125 has biased composition (low complexity). A tr-type G domain is found at Glu218–Lys387. Positions Gly227–Thr234 are G1. Residue Gly227–Thr234 coordinates GTP. A G2 region spans residues Gly252–His256. Residues Asp273–Gly276 are G3. GTP contacts are provided by residues Asp273 to His277 and Asn327 to Asp330. The segment at Asn327–Asp330 is G4. A G5 region spans residues Ser363–Leu365.

This sequence belongs to the TRAFAC class translation factor GTPase superfamily. Classic translation factor GTPase family. IF-2 subfamily.

The protein resides in the cytoplasm. In terms of biological role, one of the essential components for the initiation of protein synthesis. Protects formylmethionyl-tRNA from spontaneous hydrolysis and promotes its binding to the 30S ribosomal subunits. Also involved in the hydrolysis of GTP during the formation of the 70S ribosomal complex. This Staphylococcus haemolyticus (strain JCSC1435) protein is Translation initiation factor IF-2.